The sequence spans 875 residues: MVANGHFASNGEGQDSGSYEHGVQVIDEDKEFNPNVSRYLTYENVTPAGFNYHLISVFGSQSTGKSTLLNHLFGTHFSVMSETERRQTTKGIWLSKNKRVESSKDRDPQMKMADNILVMDVEGTDGRERGEDQDFERKSALFALATSEVLIVNIWEHQVGLYQGANMGLLKTVFEVNLELFLKDNKSTPRSLLFFVIRDFVGTTPLQNLQNTLLQDLNRIWSSLSKPAGLENSTINDYFDFAFAGLPHKNFQPEKFVDEVQKLSTRFRNAHRDPNNVDSRGTGSIEGGIFLPEYHRRIPADGFAVYAEGVWDQIVNNKDLDLPTQQELLAQFRCDEISREALVAFDEAISPFESKQAEAVQAGSPQVLGGLGPVMRNARMNAVKNFDAEASRYHKRVYQMKKSELEEKIDTRLKALFLGQLNAAHRSGVQDFSESVSAAVKAGQKRGASYDFAEIVSRERQLAIEKFEKEARSTLVEDAPWSNYQQELSLYQKDLERISGQLRRDEMRRLATRVERWVRSRLGESVDLEFNALGSGRGGSGAPEFGDKPSENTIWDRVWTIFVDTVLDAERRFTERASSFDASLDEVDVGLWRLRRKSWGVLRAKIEEEVMEGNLLLKLRENFEDKFRYDDAGVPRIWRPTDDIESVYTQARESTLTLIPLLARFRLAETNAPPPLDKWIGHTPSSATPADEEDLTPIGGVDEDEGKSLEEEMTMIGEAKKQDLIVRFKKTADGVYVEAKRSAIGGITQVPLYFYGLLLALGWNEIMAVLRNPAYFFLLFVCAIGAYVTYQLNLWGPIIKMTEAASHQALEEGKRRLRDFLEASDTGRQAMAMSGARNATEEHEMSNLNRKSGERGGQKYRGEDVADDDDVDDDF.

Residues 1–749 (MVANGHFASN…KRSAIGGITQ (749 aa)) lie on the Cytoplasmic side of the membrane. A GB1/RHD3-type G domain is found at 49–307 (GFNYHLISVF…IPADGFAVYA (259 aa)). 59-66 (GSQSTGKS) lines the GTP pocket. The stretch at 482–506 (SNYQQELSLYQKDLERISGQLRRDE) forms a coiled coil. The tract at residues 676–704 (LDKWIGHTPSSATPADEEDLTPIGGVDED) is disordered. Residues 690–704 (ADEEDLTPIGGVDED) are compositionally biased toward acidic residues. A helical membrane pass occupies residues 750–770 (VPLYFYGLLLALGWNEIMAVL). Over 771–773 (RNP) the chain is Lumenal. Residues 774–794 (AYFFLLFVCAIGAYVTYQLNL) form a helical membrane-spanning segment. Residues 795–875 (WGPIIKMTEA…ADDDDVDDDF (81 aa)) lie on the Cytoplasmic side of the membrane. Positions 831–875 (MAMSGARNATEEHEMSNLNRKSGERGGQKYRGEDVADDDDVDDDF) are disordered. Positions 839 to 864 (ATEEHEMSNLNRKSGERGGQKYRGED) are enriched in basic and acidic residues. Over residues 865 to 875 (VADDDDVDDDF) the composition is skewed to acidic residues.

It belongs to the TRAFAC class dynamin-like GTPase superfamily. GB1/RHD3 GTPase family. RHD3 subfamily.

The protein resides in the endoplasmic reticulum membrane. In terms of biological role, cooperates with the reticulon proteins and tubule-shaping DP1 family proteins to generate and maintain the structure of the tubular endoplasmic reticulum network. Has GTPase activity, which is required for its function in ER organization. The chain is Protein SEY1 from Ajellomyces dermatitidis (strain ER-3 / ATCC MYA-2586) (Blastomyces dermatitidis).